The sequence spans 947 residues: Protein NLP8 (947 aa).

Disordered regions lie at residues 114 to 135 (RSSA…ELSG), 509 to 533 (STKK…TTSS), and 550 to 591 (SMFS…EKNV). Residues 126 to 135 (RSSDSDELSG) are compositionally biased toward basic and acidic residues. Polar residues-rich tracts occupy residues 522–533 (SDMSNFPQTTSS) and 550–572 (SMFS…TLEQ). Residues 573 to 587 (DVSKARTPEKKKSTT) show a composition bias toward basic and acidic residues. Positions 577–671 (ARTPEKKKST…LDSVQGVEGG (95 aa)) constitute an RWP-RK domain. Residues 646–666 (RKINKVNRSLRKIQTVLDSVQ) are a coiled coil. Low complexity predominate over residues 805–815 (SCSISDSSNGS). A disordered region spans residues 805–828 (SCSISDSSNGSGAVLRGSSSTSME). The PB1 domain occupies 847-929 (TLIVKASYRE…HSVKFLVRDL (83 aa)).

The protein resides in the nucleus. Its function is as follows. Probable transcription factor. This Arabidopsis thaliana (Mouse-ear cress) protein is Protein NLP8 (NLP8).